The chain runs to 262 residues: Acyl-[acyl-carrier-protein]--UDP-N-acetylglucosamine O-acyltransferase (262 aa).

It belongs to the transferase hexapeptide repeat family. LpxA subfamily. As to quaternary structure, homotrimer.

It localises to the cytoplasm. It catalyses the reaction a (3R)-hydroxyacyl-[ACP] + UDP-N-acetyl-alpha-D-glucosamine = a UDP-3-O-[(3R)-3-hydroxyacyl]-N-acetyl-alpha-D-glucosamine + holo-[ACP]. The protein operates within glycolipid biosynthesis; lipid IV(A) biosynthesis; lipid IV(A) from (3R)-3-hydroxytetradecanoyl-[acyl-carrier-protein] and UDP-N-acetyl-alpha-D-glucosamine: step 1/6. In terms of biological role, involved in the biosynthesis of lipid A, a phosphorylated glycolipid that anchors the lipopolysaccharide to the outer membrane of the cell. The chain is Acyl-[acyl-carrier-protein]--UDP-N-acetylglucosamine O-acyltransferase from Burkholderia ambifaria (strain MC40-6).